A 350-amino-acid polypeptide reads, in one-letter code: Small ribosomal subunit biogenesis GTPase RsgA (350 aa).

A compositionally biased stretch (polar residues) spans 1-17; sequence MSKNKLSKGQQRRVQAN. Positions 1 to 35 are disordered; the sequence is MSKNKLSKGQQRRVQANHQRRLRTDRKPELDDSQL. The region spanning 103–273 is the CP-type G domain; sequence TSVLTRPDLY…VIDSPGVREF (171 aa). GTP is bound by residues 159–162 and 213–221; these read NKID and GQSGVGKSS. The Zn(2+) site is built by cysteine 297, cysteine 302, histidine 304, and cysteine 310.

It belongs to the TRAFAC class YlqF/YawG GTPase family. RsgA subfamily. Monomer. Associates with 30S ribosomal subunit, binds 16S rRNA. Requires Zn(2+) as cofactor.

The protein localises to the cytoplasm. One of several proteins that assist in the late maturation steps of the functional core of the 30S ribosomal subunit. Helps release RbfA from mature subunits. May play a role in the assembly of ribosomal proteins into the subunit. Circularly permuted GTPase that catalyzes slow GTP hydrolysis, GTPase activity is stimulated by the 30S ribosomal subunit. This chain is Small ribosomal subunit biogenesis GTPase RsgA, found in Yersinia enterocolitica serotype O:8 / biotype 1B (strain NCTC 13174 / 8081).